Here is a 419-residue protein sequence, read N- to C-terminus: NF-kappa-B essential modulator (419 aa).

A required for interaction with and ubiquitination by MARCHF2 region spans residues 1 to 197 (MNRHLWKSQL…REALQQQHSV (197 aa)). Phosphoserine; by IKKB is present on residues Ser31 and Ser43. An interaction with CHUK/IKBKB region spans residues 44 to 111 (EQGAPETLQR…KLVERLGLEK (68 aa)). Positions 49–356 (ETLQRCLEEN…CQESARIEDM (308 aa)) form a coiled coil. Ser68 is modified (phosphoserine). Phosphoserine; by ATM is present on Ser85. Residues Lys111, Lys139, Lys143, Lys226, Lys246, and Lys264 each participate in a glycyl lysine isopeptide (Lys-Gly) (interchain with G-Cter in ubiquitin) cross-link. The tract at residues 150-257 (LGELQESQSR…SVVGSERKRG (108 aa)) is interaction with TANK. The interval 242–350 (DNHIKSSVVG…SKLKASCQES (109 aa)) is ubiquitin-binding (UBAN). Positions 246–365 (KSSVVGSERK…MRKRHVEVSQ (120 aa)) are self-association. The required for interaction with TNFAIP3 stretch occupies residues 251–419 (GSERKRGMQL…LQIHVMECIE (169 aa)). A Glycyl lysine isopeptide (Lys-Gly) (interchain with G-Cter in SUMO); alternate cross-link involves residue Lys277. A Glycyl lysine isopeptide (Lys-Gly) (interchain with G-Cter in ubiquitin); alternate cross-link involves residue Lys277. Glycyl lysine isopeptide (Lys-Gly) (interchain with G-Cter in ubiquitin) cross-links involve residues Lys283, Lys285, Lys292, and Lys302. Lys309 participates in a covalent cross-link: Glycyl lysine isopeptide (Lys-Gly) (interchain with G-Cter in SUMO); alternate. A Glycyl lysine isopeptide (Lys-Gly) (interchain with G-Cter in ubiquitin); alternate cross-link involves residue Lys309. Residues Lys321 and Lys325 each participate in a glycyl lysine isopeptide (Lys-Gly) (interchain with G-Cter in ubiquitin) cross-link. The leucine-zipper stretch occupies residues 322–343 (LAEKKELLQEQLEQLQREYSKL). Lys326 participates in a covalent cross-link: Glycyl lysine isopeptide (Lys-Gly) (interchain with G-Cter in ubiquitin and interchain with MARCHF2). Positions 358-395 (KRHVEVSQAPLPPAPAYLSSPLALPSQRRSPPEEPPDF) are disordered. Residues 373–386 (AYLSSPLALPSQRR) show a composition bias toward low complexity. Ser376 is subject to Phosphoserine; by IKKB. An interaction with CYLD region spans residues 382 to 419 (PSQRRSPPEEPPDFCCPKCQYQAPDMDTLQIHVMECIE). Ser387 carries the phosphoserine modification. Residues 389–419 (PEEPPDFCCPKCQYQAPDMDTLQIHVMECIE) form a CCHC NOA-type zinc finger. A Zn(2+)-binding site is contributed by Cys397. Lys399 participates in a covalent cross-link: Glycyl lysine isopeptide (Lys-Gly) (interchain with G-Cter in ubiquitin). Zn(2+)-binding residues include Cys400, His413, and Cys417.

As to quaternary structure, homodimer; disulfide-linked. Component of the I-kappa-B-kinase (IKK) core complex consisting of CHUK, IKBKB and IKBKG; probably four alpha/CHUK-beta/IKBKB dimers are associated with four gamma/IKBKG subunits. The IKK core complex seems to associate with regulatory or adapter proteins to form a IKK-signalosome holo-complex. The IKK complex associates with TERF2IP/RAP1, leading to promote IKK-mediated phosphorylation of RELA/p65. Part of a complex composed of NCOA2, NCOA3, CHUK/IKKA, IKBKB, IKBKG and CREBBP. Interacts with COPS3, CYLD, NALP2, TRPC4AP and PIDD1. Interacts with ATM; the complex is exported from the nucleus. Interacts with TRAF6. Interacts with IKBKE. Interacts with TANK; the interaction is enhanced by IKBKE and TBK1. Part of a ternary complex consisting of TANK, IKBKB and IKBKG. Interacts with ZFAND5. Interacts with RIPK2. Interacts with TNIP1 and TNFAIP3; TNIP1 facilitates the TNFAIP3-mediated de-ubiquitination of IKBKG. Interacts with TNFAIP3; the interaction is induced by TNF stimulation and by polyubiquitin. Binds (via UBAN region) polyubiquitin; binds both 'Lys-63'-linked and linear polyubiquitin, with higher affinity for linear ubiquitin. Interacts with NLRP10. Interacts with TANK; this interaction increases in response to DNA damage. Interacts with USP10; this interaction increases in response to DNA damage. Interacts with ZC3H12A; this interaction increases in response to DNA damage. Interacts with IFIT5; the interaction synergizes the recruitment of IKK to MAP3K7 and enhances IKK phosphorylation. Interacts with TRIM29; this interaction induces IKBKG/NEMO ubiquitination and proteolytic degradation. Interacts with TRIM13; this interaction leads to IKBKG/NEMO ubiquitination. Interacts with ARFIP2. Interacts with RIPK1. Interacts with (ubiquitinated) BCL10; interaction with polyubiquitinated BCL10 via both 'Lys-63'-linked and linear ubiquitin is required for TCR-induced NF-kappa-B activation. Interacts with MARCHF2; during the late stages of macrophage viral and bacterial infection; the interaction leads to ubiquitination and degradation of IKBKG/NEMO. (Microbial infection) Interacts with Molluscum contagiosum virus protein MC005; this interaction inhibits NF-kappa-B activation. In terms of assembly, (Microbial infection) Interacts with HTLV-1 Tax oncoprotein; the interaction activates IKBKG. As to quaternary structure, (Microbial infection) Interacts with Shigella flexneri ipah9.8; the interaction promotes TNIP1-dependent 'Lys-27'-linked polyubiquitination of IKBKG which perturbs NF-kappa-B activation during bacterial infection. (Microbial infection) Interacts with SARS coronavirus-2/SARS-CoV-2 virus protein ORF9B (via N-terminus); the interaction inhibits polyubiquitination through 'Lys-63' and NF-kappa-B activation. Phosphorylation at Ser-68 attenuates aminoterminal homodimerization. In terms of processing, polyubiquitinated on Lys-285 via 'Lys-63'-linked ubiquitin; the ubiquitination is mediated downstream of NOD2 and RIPK2 and probably plays a role in signaling by facilitating interactions with ubiquitin domain-containing proteins and activates the NF-kappa-B pathway. Polyubiquitinated on Lys-285 and Lys-399 through 'Lys-63'-linked ubiquitin; the ubiquitination is mediated by BCL10, MALT1 and TRAF6 and probably plays a role in signaling by facilitating interactions with ubiquitin domain-containing proteins and activates the NF-kappa-B pathway. Monoubiquitinated on Lys-277 and Lys-309; promotes nuclear export. Polyubiquitinated through 'Lys-27' by TRIM23; involved in antiviral innate and inflammatory responses. Linear polyubiquitinated on Lys-111, Lys-143, Lys-226, Lys-246, Lys-264, Lys-277, Lys-285, Lys-292, Lys-302, Lys-309 and Lys-326; the head-to-tail polyubiquitination is mediated by the LUBAC complex and plays a key role in NF-kappa-B activation. Deubiquitinated by USP10 in a TANK-dependent and -independent manner, leading to the negative regulation of NF-kappa-B signaling upon DNA damage. Ubiquitinated at Lys-326 by MARCHF2 following bacterial and viral infection which leads to its degradation. Polyubiquitinated via 'Lys-29'-linked ubiquitin; leading to lysosomal degradation. Post-translationally, sumoylated on Lys-277 and Lys-309 with SUMO1; the modification results in phosphorylation of Ser-85 by ATM leading to a replacement of the sumoylation by mono-ubiquitination on these residues. Neddylated by TRIM40, resulting in stabilization of NFKBIA and down-regulation of NF-kappa-B activity. In terms of processing, (Microbial infection) Cleaved by hepatitis A virus (HAV) protease 3C allowing the virus to disrupt the host innate immune signaling. Post-translationally, (Microbial infection) Deubiquitinated by Epstein-Barr virus BPLF1 on both 'Lys-48' and 'Lys-63'-linked ubiquitin chains; leading to NF-kappa-B signaling inhibition. (Microbial infection) Polyubiquitinated on Lys-309 and Lys-321 via 'Lys-27'-linked ubiquitin by Shigella flexneri E3 ubiquitin-protein ligase ipah9.8, leading to its degradation by the proteasome. In terms of processing, (Microbial infection) Polyubiquitination through 'Lys-63' is interrupted by interaction with SARS coronavirus-2/SARS-CoV-2 virus protein ORF9B which inhibits the NF-kappa-B pathway. In terms of tissue distribution, heart, brain, placenta, lung, liver, skeletal muscle, kidney and pancreas.

The protein localises to the cytoplasm. It localises to the nucleus. Functionally, regulatory subunit of the IKK core complex which phosphorylates inhibitors of NF-kappa-B thus leading to the dissociation of the inhibitor/NF-kappa-B complex and ultimately the degradation of the inhibitor. Its binding to scaffolding polyubiquitin plays a key role in IKK activation by multiple signaling receptor pathways. Can recognize and bind both 'Lys-63'-linked and linear polyubiquitin upon cell stimulation, with a much higher affinity for linear polyubiquitin. Could be implicated in NF-kappa-B-mediated protection from cytokine toxicity. Essential for viral activation of IRF3. Involved in TLR3- and IFIH1-mediated antiviral innate response; this function requires 'Lys-27'-linked polyubiquitination. In terms of biological role, (Microbial infection) Also considered to be a mediator for HTLV-1 Tax oncoprotein activation of NF-kappa-B. This chain is NF-kappa-B essential modulator, found in Homo sapiens (Human).